The chain runs to 215 residues: MOB kinase activator-like 1B (215 aa).

The disordered stretch occupies residues 1 to 25 (MSLFGLGRNQKTFRPKKSAPSGTKG). 4 residues coordinate Zn(2+): Cys79, Cys84, His161, and His166.

This sequence belongs to the MOB1/phocein family. In terms of assembly, interacts with SIK1. In terms of tissue distribution, expression is detected along the vasculature in cotyledons, hypocotyls and roots of 3- to 4-day-old seedlings.

The protein is MOB kinase activator-like 1B of Arabidopsis thaliana (Mouse-ear cress).